Consider the following 195-residue polypeptide: Calcineurin B homologous protein 1 (195 aa).

Gly-2 is lipidated: N-myristoyl glycine. Positions Gly-2 to Ser-6 match the Necessary for association with microtubule and interaction with GAPDH motif. EF-hand domains are found at residues Ser-26–Pro-61, Phe-71–Glu-106, Ser-110–Val-145, and Gln-151–Glu-186. Residues Asp-123, Asp-125, Asp-127, Lys-129, and Glu-134 each coordinate Ca(2+). The Nuclear export signal 1 motif lies at Val-138–Ile-147. Residues Asp-164, Asp-166, Asp-168, and Glu-175 each coordinate Ca(2+). A Nuclear export signal 2 motif is present at residues Phe-176–Val-185.

This sequence belongs to the calcineurin regulatory subunit family. CHP subfamily. In terms of assembly, monomer. Interacts with STK17B; the interaction occurs in a calcium-independent manner and induces the translocation of CHP1 from the Golgi to the nucleus. Interacts with GAPDH; the interaction is direct, occurs in a N-myristoylation-dependent manner and facilitates the ability of CHP1 to bind microtubules. Interacts with KIF1B (via the C-terminal end of the kinesin-motor domain); the interaction occurs in a calcium-dependent manner. Associates (via C-terminal domain) with microtubules; the association occurs with polymerized microtubules during the cell cycle in a myristoylation- and calcium-independent manner and is enhanced by GAPDH. Interacts with PPP3CA. Interacts with SLC9A1/NHE1 (via the cytoplasmic C-terminal domain); the interaction occurs at the plasma membrane in a calcium-dependent manner and at a domain that is critical for growth factor stimulation of the exchanger. Interacts with SLC9A3; increases SLC9A3 trafficking and activity at the plasma membrane. Phosphorylated; decreased phosphorylation is associated with an increase in SLC9A1/NHE1 Na(+)/H(+) exchange activity. Phosphorylation occurs in serum-dependent manner. The phosphorylation state may regulate the binding to SLC9A1/NHE1. Post-translationally, both N-myristoylation and calcium-mediated conformational changes are essential for its function in exocytic traffic. N-myristoylation is required for its association with microtubules and interaction with GAPDH, but not for the constitutive association to membranes.

The protein localises to the nucleus. Its subcellular location is the cytoplasm. The protein resides in the cytoskeleton. It is found in the endomembrane system. It localises to the endoplasmic reticulum-Golgi intermediate compartment. The protein localises to the endoplasmic reticulum. Its subcellular location is the cell membrane. The protein resides in the membrane. In terms of biological role, calcium-binding protein involved in different processes such as regulation of vesicular trafficking, plasma membrane Na(+)/H(+) exchanger and gene transcription. Involved in the constitutive exocytic membrane traffic. Mediates the association between microtubules and membrane-bound organelles of the endoplasmic reticulum and Golgi apparatus and is also required for the targeting and fusion of transcytotic vesicles (TCV) with the plasma membrane. Functions as an integral cofactor in cell pH regulation by controlling plasma membrane-type Na(+)/H(+) exchange activity. Affects the pH sensitivity of SLC9A1/NHE1 by increasing its sensitivity at acidic pH. Required for the stabilization and localization of SLC9A1/NHE1 at the plasma membranes. Inhibits serum- and GTPase-stimulated Na(+)/H(+) exchange. Plays a role as an inhibitor of ribosomal RNA transcription by repressing the nucleolar UBF1 transcriptional activity. May sequester UBF1 in the nucleoplasm and limit its translocation to the nucleolus. Associates to the ribosomal gene promoter. Acts as a negative regulator of the calcineurin/NFAT signaling pathway. Inhibits NFAT nuclear translocation and transcriptional activity by suppressing the calcium-dependent calcineurin phosphatase activity. Also negatively regulates the kinase activity of the apoptosis-induced kinase STK17B. Inhibits both STK17B auto- and substrate-phosphorylations in a calcium-dependent manner. This Mus musculus (Mouse) protein is Calcineurin B homologous protein 1 (Chp1).